The sequence spans 641 residues: Soluble starch synthase 1, chloroplastic/amyloplastic (641 aa).

The transit peptide at 1–113 (MATAAGMGIG…DSIDKTIFVA (113 aa)) directs the protein to the chloroplast. Residues 62-96 (TFLVPTSTPPAPTQSPAPAPTPPPLPDSGVGEIEP) form a disordered region. Pro residues predominate over residues 68-87 (STPPAPTQSPAPAPTPPPLP). Position 147 (Lys-147) interacts with ADP-alpha-D-glucose.

This sequence belongs to the glycosyltransferase 1 family. Bacterial/plant glycogen synthase subfamily. As to expression, leaves and immature seeds.

Its subcellular location is the plastid. The protein resides in the chloroplast. It localises to the amyloplast. It catalyses the reaction [(1-&gt;4)-alpha-D-glucosyl](n) + ADP-alpha-D-glucose = [(1-&gt;4)-alpha-D-glucosyl](n+1) + ADP + H(+). It functions in the pathway glycan biosynthesis; starch biosynthesis. Involved in starch synthesis in endosperm amyloplasts. Plays a role in the elongation of amylopectin chains. Synthesizes preferentially amylopectin chains with a degree of polymerization (DP) of 7 to 11 by elongating chains with a DP of 4 to 7. Generates distincly chains with a DP of 8 to 12 chains from short chains with a DP of 6 to 7. The sequence is that of Soluble starch synthase 1, chloroplastic/amyloplastic from Oryza sativa subsp. japonica (Rice).